The chain runs to 155 residues: MSRRSTAEKKTAKSDPIYHNRLVNMVVNRILKNGKKSLAYRILYRAIKKIQQKTDKNPLSVLRQAIRRVTPNVTVKARRVGGSTYRVPTEIRSTQGKVLAIRWLLGASRKRPGRNMNFKLSHELMDAARGNGNAIRKKEETHRMAEANRAFAHFR.

This sequence belongs to the universal ribosomal protein uS7 family. As to quaternary structure, part of the 30S ribosomal subunit.

The protein localises to the plastid. It localises to the chloroplast. One of the primary rRNA binding proteins, it binds directly to 16S rRNA where it nucleates assembly of the head domain of the 30S subunit. This is Small ribosomal subunit protein uS7c (rps7) from Pinus thunbergii (Japanese black pine).